The following is a 202-amino-acid chain: N-(5'-phosphoribosyl)anthranilate isomerase (202 aa).

It belongs to the TrpF family.

It catalyses the reaction N-(5-phospho-beta-D-ribosyl)anthranilate = 1-(2-carboxyphenylamino)-1-deoxy-D-ribulose 5-phosphate. It functions in the pathway amino-acid biosynthesis; L-tryptophan biosynthesis; L-tryptophan from chorismate: step 3/5. The chain is N-(5'-phosphoribosyl)anthranilate isomerase from Bacillus cereus (strain ATCC 14579 / DSM 31 / CCUG 7414 / JCM 2152 / NBRC 15305 / NCIMB 9373 / NCTC 2599 / NRRL B-3711).